The sequence spans 126 residues: Flagellar protein FliT (126 aa).

The required for homodimerization stretch occupies residues 1–50; that stretch reads MASPHRLLKDYQQLLSLSQKILHLAVNGQWDTLVEQEIVYVQSVEGLVNT. Residues 60-98 form a fliD binding region; the sequence is MRLHLRQILQEVMDNEAKVKQLLQKRMDELSSLMGQSLK.

It belongs to the FliT family. Homodimer. Interacts with FliD and FlhC.

The protein localises to the cytoplasm. Its subcellular location is the cytosol. In terms of biological role, dual-function protein that regulates the transcription of class 2 flagellar operons and that also acts as an export chaperone for the filament-capping protein FliD. As a transcriptional regulator, acts as an anti-FlhDC factor; it directly binds FlhC, thus inhibiting the binding of the FlhC/FlhD complex to class 2 promoters, resulting in decreased expression of class 2 flagellar operons. As a chaperone, effects FliD transition to the membrane by preventing its premature polymerization, and by directing it to the export apparatus. The polypeptide is Flagellar protein FliT (Pectobacterium carotovorum subsp. carotovorum (strain PC1)).